The following is a 664-amino-acid chain: Putative carboxypeptidase suro-1 (664 aa).

An N-terminal signal peptide occupies residues Met-1–Cys-23. Residues Ser-24 to Ile-110 constitute a propeptide, activation peptide. A Peptidase M14 domain is found at Asp-160–Val-473. Residues His-219 and Glu-222 each contribute to the Zn(2+) site. Residues His-219 to Glu-222, Arg-281, and Asn-306 to Arg-307 each bind substrate. His-361 lines the Zn(2+) pocket. Ser-362–Tyr-363 provides a ligand contact to substrate. Glu-437 acts as the Proton donor/acceptor in catalysis. Residues Ala-512 to Ser-543 show a composition bias toward low complexity. The disordered stretch occupies residues Ala-512–Thr-590. The segment covering Pro-564–Met-573 has biased composition (pro residues). Residues Ser-574–Thr-583 show a composition bias toward low complexity. A ShKT domain is found at Cys-621 to Cys-657. 3 disulfide bridges follow: Cys-621–Cys-657, Cys-628–Cys-650, and Cys-639–Cys-654.

The protein belongs to the peptidase M14 family. The cofactor is Zn(2+). Localizes in stripes along the cuticle.

The protein localises to the cytoplasmic vesicle. Its subcellular location is the secreted. May play a role in processing or organization of cuticle collagen proteins, including rol-6 and col-19. This Caenorhabditis elegans protein is Putative carboxypeptidase suro-1.